A 136-amino-acid polypeptide reads, in one-letter code: Galectin-7 (136 aa).

A Galectin domain is found at 6–136 (HKTSLPQGVR…DVQLHSLNIF (131 aa)). 70 to 76 (WGREERG) serves as a coordination point for a beta-D-galactoside.

In terms of assembly, monomer.

The protein localises to the cytoplasm. The protein resides in the nucleus. Its subcellular location is the secreted. Its function is as follows. Could be involved in cell-cell and/or cell-matrix interactions necessary for normal growth control. Pro-apoptotic protein that functions intracellularly upstream of JNK activation and cytochrome c release. The protein is Galectin-7 (Lgals7) of Mus musculus (Mouse).